The sequence spans 1063 residues: Coiled-coil domain-containing protein 187 (1063 aa).

7 disordered regions span residues 1-41 (MPTL…AADW), 62-184 (RWPG…SRLH), 219-278 (RVEA…KDED), 300-319 (PPPVLRRHHSKDPSRDPALT), 392-484 (RKGG…ERLG), 496-539 (GQAC…ATQP), and 551-658 (WEDP…LEEK). The span at 111–124 (SSVSSGRLSCSSGG) shows a compositional bias: low complexity. Positions 146–160 (RKSDARLEQLRDKIR) are enriched in basic and acidic residues. Residues 163–181 (AWQQGSCASLGTSAPSSAS) show a composition bias toward polar residues. A compositionally biased stretch (basic and acidic residues) spans 219 to 233 (RVEAKASHGQGRELS). Composition is skewed to basic and acidic residues over residues 431 to 442 (TERKHSSLERAR) and 472 to 484 (SFQRPESPHERLG). A compositionally biased stretch (low complexity) spans 508 to 517 (QRQGPSSQRP). Residues 816-851 (HLRHKQAQLQALETTAKVLKQRVDSLTAKLQGAEAL) adopt a coiled-coil conformation. The disordered stretch occupies residues 1010–1030 (PRSCGKGDPADRPWAGWSGGR).

In Homo sapiens (Human), this protein is Coiled-coil domain-containing protein 187.